We begin with the raw amino-acid sequence, 916 residues long: Protein translocase subunit SecA (916 aa).

Residues Gln87, 105–109 (GEGKT), and Asp507 each bind ATP. Residues Cys900, Cys902, Cys911, and His912 each coordinate Zn(2+).

The protein belongs to the SecA family. As to quaternary structure, monomer and homodimer. Part of the essential Sec protein translocation apparatus which comprises SecA, SecYEG and auxiliary proteins SecDF-YajC and YidC. Zn(2+) serves as cofactor.

The protein resides in the cell inner membrane. The protein localises to the cytoplasm. The catalysed reaction is ATP + H2O + cellular proteinSide 1 = ADP + phosphate + cellular proteinSide 2.. Its function is as follows. Part of the Sec protein translocase complex. Interacts with the SecYEG preprotein conducting channel. Has a central role in coupling the hydrolysis of ATP to the transfer of proteins into and across the cell membrane, serving both as a receptor for the preprotein-SecB complex and as an ATP-driven molecular motor driving the stepwise translocation of polypeptide chains across the membrane. This is Protein translocase subunit SecA from Neisseria gonorrhoeae (strain NCCP11945).